A 395-amino-acid chain; its full sequence is Elongation factor Tu (395 aa).

Residues 10 to 204 enclose the tr-type G domain; that stretch reads KPHCNIGTIG…TVDSYIPDPQ (195 aa). Residues 19-26 are G1; the sequence is GHVDHGKT. Residue 19 to 26 coordinates GTP; that stretch reads GHVDHGKT. A Mg(2+)-binding site is contributed by T26. A G2 region spans residues 61–65; the sequence is GITIS. The G3 stretch occupies residues 82–85; that stretch reads DCPG. GTP is bound by residues 82–86 and 137–140; these read DCPGH and NKCD. Residues 137-140 form a G4 region; sequence NKCD. Residues 173–175 are G5; it reads SAL.

Belongs to the TRAFAC class translation factor GTPase superfamily. Classic translation factor GTPase family. EF-Tu/EF-1A subfamily. As to quaternary structure, monomer.

It localises to the cytoplasm. The enzyme catalyses GTP + H2O = GDP + phosphate + H(+). GTP hydrolase that promotes the GTP-dependent binding of aminoacyl-tRNA to the A-site of ribosomes during protein biosynthesis. The sequence is that of Elongation factor Tu from Agathobacter rectalis (strain ATCC 33656 / DSM 3377 / JCM 17463 / KCTC 5835 / VPI 0990) (Eubacterium rectale).